The sequence spans 1038 residues: Translation initiation factor IF-2 (1038 aa).

The disordered stretch occupies residues 48 to 426 (DALQGPGGNA…RQRRQEYEAM (379 aa)). Positions 58-87 (GKSAAKPGAPRKAAPAKPAAPSPAAAARPA) are enriched in low complexity. A compositionally biased stretch (pro residues) spans 88 to 99 (APKPGAPAPKPA). Residues 100-114 (EAPSSTPAAPSAPSA) are compositionally biased toward low complexity. Residues 115-125 (GPRPGPKPAPK) show a composition bias toward pro residues. Low complexity predominate over residues 126 to 141 (AAPVTPVPAAEFSAPA). Residues 142 to 153 (PAQPAAPQPQAP) are compositionally biased toward pro residues. Over residues 177–199 (DGGRDGGQRDGGRGGERGGDRPA) the composition is skewed to basic and acidic residues. Low complexity predominate over residues 200-219 (RPAGQGAPRPGGARPAGPRP). Positions 261-277 (SGPGGAPRPQGGQGQGG) are enriched in gly residues. Over residues 299–315 (GNRPNPGMMPQRPAAGP) the composition is skewed to low complexity. The segment covering 319–406 (PGGGGRGPGG…GTQGAFGRPG (88 aa)) has biased composition (gly residues). Residues 410 to 419 (RRGRKSKRQR) are compositionally biased toward basic residues. Positions 531–703 (SRPPVVTVMG…VVLTADASLD (173 aa)) constitute a tr-type G domain. Residues 540–547 (GHVDHGKT) form a G1 region. A GTP-binding site is contributed by 540-547 (GHVDHGKT). A G2 region spans residues 565-569 (GITQH). The tract at residues 590-593 (DTPG) is G3. GTP contacts are provided by residues 590 to 594 (DTPGH) and 644 to 647 (NKID). The segment at 644–647 (NKID) is G4. The G5 stretch occupies residues 680–682 (SAK).

Belongs to the TRAFAC class translation factor GTPase superfamily. Classic translation factor GTPase family. IF-2 subfamily.

It is found in the cytoplasm. Functionally, one of the essential components for the initiation of protein synthesis. Protects formylmethionyl-tRNA from spontaneous hydrolysis and promotes its binding to the 30S ribosomal subunits. Also involved in the hydrolysis of GTP during the formation of the 70S ribosomal complex. This is Translation initiation factor IF-2 from Streptomyces griseus subsp. griseus (strain JCM 4626 / CBS 651.72 / NBRC 13350 / KCC S-0626 / ISP 5235).